An 87-amino-acid polypeptide reads, in one-letter code: Putative membrane protein insertion efficiency factor (87 aa).

This sequence belongs to the UPF0161 family.

Its subcellular location is the cell membrane. In terms of biological role, could be involved in insertion of integral membrane proteins into the membrane. The chain is Putative membrane protein insertion efficiency factor from Ligilactobacillus salivarius (strain UCC118) (Lactobacillus salivarius).